A 149-amino-acid chain; its full sequence is uncharacterized protein (149 aa).

Positions 1–149 constitute an N-acetyltransferase domain; the sequence is MNIRQAKTSD…VHYCLNVPAK (149 aa).

It belongs to the acetyltransferase family.

This is an uncharacterized protein from Bacillus subtilis (strain 168).